The primary structure comprises 313 residues: Protein FixB (313 aa).

255–283 (LYLAVGISGQIQHMVGANASQTIFAINKD) contributes to the FAD binding site.

It belongs to the ETF alpha-subunit/FixB family. Heterodimer of FixA and FixB.

It participates in amine and polyamine metabolism; carnitine metabolism. Required for anaerobic carnitine reduction. May bring reductant to CaiA. The protein is Protein FixB of Escherichia coli O157:H7.